Consider the following 29-residue polypeptide: Cytochrome c oxidase subunit 7A1, mitochondrial (29 aa).

Basic and acidic residues predominate over residues 1 to 13 (LENRVAEKQKLFQ). Residues 1–29 (LENRVAEKQKLFQEDNGLPVHLKGGATDN) form a disordered region.

This sequence belongs to the cytochrome c oxidase VIIa family. As to quaternary structure, component of the complex IV (CIV, cytochrome c oxidase), a multisubunit enzyme composed of 14 subunits. The complex is composed of a catalytic core of 3 subunits MT-CO1, MT-CO2 and MT-CO3, encoded in the mitochondrial DNA, and 11 supernumerary subunits COX4I1 (or COX4I2), COX5A, COX5B, COX6A2 (or COX6A1), COX6B1 (or COX6B2), COX6C, COX7A1 (or COX7A2), COX7B, COX7C, COX8B and NDUFA4, which are encoded in the nuclear genome. The complex exists as a monomer or a dimer and forms supercomplexes (SCs) in the inner mitochondrial membrane with NADH-ubiquinone oxidoreductase (complex I, CI) and ubiquinol-cytochrome c oxidoreductase (cytochrome b-c1 complex, complex III, CIII), resulting in different assemblies (supercomplex SCI(1)III(2)IV(1) and megacomplex MCI(2)III(2)IV(2)).

It localises to the mitochondrion inner membrane. The protein operates within energy metabolism; oxidative phosphorylation. Functionally, component of the mitochondrial respiratory complex IV (CIV, also named cytochrome c oxidase complex), the last enzyme in the mitochondrial electron transport chain which drives oxidative phosphorylation. The CIV complex is the component of the respiratory chain that catalyzes the reduction of oxygen to water. Acts as an assembly factor that specifically drives the homodimerization of CIV complexes, mediating the formation of mitochondrial respiratory supercomplexes (respirasomes) containing two CIV: supercomplxes with two molecules of CIV show improved activity. Despite being highly expressed in brown adipose tissue, not required for thermogenesis. The sequence is that of Cytochrome c oxidase subunit 7A1, mitochondrial (COX7A1) from Ovis aries (Sheep).